A 551-amino-acid chain; its full sequence is FGGY carbohydrate kinase domain-containing protein (551 aa).

It belongs to the FGGY kinase family. In terms of tissue distribution, expressed in kidney, lung and small intestine and to a lower extent in liver and detected in cerebrospinal fluid (at protein level).

The catalysed reaction is D-ribulose + ATP = D-ribulose 5-phosphate + ADP + H(+). It functions in the pathway carbohydrate metabolism; pentose and glucuronate interconversion. Its function is as follows. Catalyzes ATP-dependent phosphorylation of D-ribulose at C-5 to form D-ribulose 5-phosphate. Postulated to function in a metabolite repair mechanism by preventing toxic accumulation of free D-ribulose formed by non-specific phosphatase activities. Alternatively, may play a role in regulating D-ribulose 5-phosphate recycling in the pentose phosphate pathway. Can phosphorylate ribitol with low efficiency. The chain is FGGY carbohydrate kinase domain-containing protein from Homo sapiens (Human).